The following is a 704-amino-acid chain: Methionine--tRNA ligase (704 aa).

The short motif at 17-27 is the 'HIGH' region element; the sequence is PYANGPIHLGH. Residues Cys-148, Cys-151, Cys-161, and Cys-164 each coordinate Zn(2+). The 'KMSKS' region signature appears at 348 to 352; the sequence is KMSKS. Lys-351 contacts ATP. The 102-residue stretch at 603–704 folds into the tRNA-binding domain; it reads ELSKVELRVG…KDAKPGDRLK (102 aa).

It belongs to the class-I aminoacyl-tRNA synthetase family. MetG type 1 subfamily. As to quaternary structure, homodimer. Zn(2+) is required as a cofactor.

The protein localises to the cytoplasm. The enzyme catalyses tRNA(Met) + L-methionine + ATP = L-methionyl-tRNA(Met) + AMP + diphosphate. Functionally, is required not only for elongation of protein synthesis but also for the initiation of all mRNA translation through initiator tRNA(fMet) aminoacylation. This is Methionine--tRNA ligase from Leptospira borgpetersenii serovar Hardjo-bovis (strain L550).